Reading from the N-terminus, the 269-residue chain is Hydroxyethylthiazole kinase (269 aa).

Met-46 is a binding site for substrate. Arg-122 and Thr-168 together coordinate ATP. Substrate is bound at residue Gly-195.

This sequence belongs to the Thz kinase family. The cofactor is Mg(2+).

It catalyses the reaction 5-(2-hydroxyethyl)-4-methylthiazole + ATP = 4-methyl-5-(2-phosphooxyethyl)-thiazole + ADP + H(+). The protein operates within cofactor biosynthesis; thiamine diphosphate biosynthesis; 4-methyl-5-(2-phosphoethyl)-thiazole from 5-(2-hydroxyethyl)-4-methylthiazole: step 1/1. Catalyzes the phosphorylation of the hydroxyl group of 4-methyl-5-beta-hydroxyethylthiazole (THZ). The sequence is that of Hydroxyethylthiazole kinase from Chloroflexus aurantiacus (strain ATCC 29366 / DSM 635 / J-10-fl).